A 711-amino-acid polypeptide reads, in one-letter code: Acyl-CoA dehydrogenase FadE34 (711 aa).

The protein belongs to the acyl-CoA dehydrogenase family. In terms of assembly, homodimer. It depends on FAD as a cofactor.

It catalyses the reaction 3-oxochol-4-en-24-oyl-CoA + A = (22E)-3-oxochola-4,22-dien-24-oyl-CoA + AH2. The enzyme catalyses 3beta-hydroxy-chol-5-ene-24-oyl-CoA + A = 3beta-hydroxy-chol-5,22-dien-24-oyl-CoA + AH2. It participates in steroid metabolism; cholesterol degradation. In terms of biological role, involved in the second cycle of side chain dehydrogenation in the beta-oxidation of cholesterol catabolism. It contributes partly to the virulence by increasing the efficiency of beta-oxidation. Catalyzes the dehydrogenation of the five-carbon steroid side chain of 3-oxo-chol-4-en-24-oyl-CoA (3-OCO-CoA) to yield 3-oxochol-4,22-dien-24-oyl-CoA. Can also use 3beta-hydroxy-chol-5-ene-24-oyl-CoA, and shows weak activity with cholyl-CoA and deoxycholyl-CoA. The sequence is that of Acyl-CoA dehydrogenase FadE34 (fadE34) from Mycobacterium tuberculosis (strain ATCC 25618 / H37Rv).